A 399-amino-acid polypeptide reads, in one-letter code: MKILVLNCGSSSIKYKLFDMTTKEVIAQGGIEKIGLKGSFLKLTLPNGEKKVLEKDIPEHTIGVEFILNTLISPEYGAIKSLDEINAVGHRMVHGGERFSESVLLNKEVLEAFAACNDLAPLHNPANLKGVNAVSAILPNIPQVGVFDTAFHQTMPDYAYMYAIPYEMYEKYGVRRYGFHGTSHRYVSKRVCEFLGVNPVGQKIITCHIGNGGSIAAIKDGKCIDTTMGLTPLEGLMMGTRSGDIDAGAVTFIMEKEGLNTTGISNLLNKKSGVLGISGVSSDMRELLAACANGNERAILAEKMYYYRIKKYIGAYAAALGGVDIILFTGGVGENQFECRESVCKDMEFMGIKLDNNVNAKVRGEEAIISTADSKVKVVVIPTDEELLIASDTMDILKK.

Asparagine 7 serves as a coordination point for Mg(2+). Lysine 14 contacts ATP. Arginine 91 contributes to the substrate binding site. The active-site Proton donor/acceptor is the aspartate 148. ATP is bound by residues histidine 208–glycine 212, aspartate 283–arginine 285, and glycine 331–asparagine 335. Glutamate 385 is a Mg(2+) binding site.

Belongs to the acetokinase family. In terms of assembly, homodimer. The cofactor is Mg(2+). Mn(2+) is required as a cofactor.

The protein localises to the cytoplasm. The catalysed reaction is acetate + ATP = acetyl phosphate + ADP. The protein operates within metabolic intermediate biosynthesis; acetyl-CoA biosynthesis; acetyl-CoA from acetate: step 1/2. Catalyzes the formation of acetyl phosphate from acetate and ATP. Can also catalyze the reverse reaction. This is Acetate kinase from Bacteroides thetaiotaomicron (strain ATCC 29148 / DSM 2079 / JCM 5827 / CCUG 10774 / NCTC 10582 / VPI-5482 / E50).